The following is a 1261-amino-acid chain: Mediator of RNA polymerase II transcription subunit 14 (1261 aa).

Positions Met1 to Thr11 are enriched in basic and acidic residues. Disordered stretches follow at residues Met1–His21, Asn413–Glu435, and Asp1193–Thr1220. Over residues Ile417–Asp427 the composition is skewed to acidic residues. Basic and acidic residues predominate over residues Gln1205–Thr1220.

This sequence belongs to the Mediator complex subunit 14 family. As to quaternary structure, component of the Mediator complex.

The protein localises to the nucleus. Functionally, component of the Mediator complex, a coactivator involved in the regulated transcription of nearly all RNA polymerase II-dependent genes. Mediator functions as a bridge to convey information from gene-specific regulatory proteins to the basal RNA polymerase II transcription machinery. Mediator is recruited to promoters by direct interactions with regulatory proteins and serves as a scaffold for the assembly of a functional preinitiation complex with RNA polymerase II and the general transcription factors. The sequence is that of Mediator of RNA polymerase II transcription subunit 14 (MED14) from Candida albicans (strain SC5314 / ATCC MYA-2876) (Yeast).